Reading from the N-terminus, the 175-residue chain is Zinc metalloproteinase-disintegrin-like catroriarin (175 aa).

The 63-residue stretch at 1-63 (NPCCDAATCK…ECPADVFHKN (63 aa)) folds into the Disintegrin domain. Disulfide bonds link cysteine 3/cysteine 26, cysteine 17/cysteine 23, cysteine 22/cysteine 48, cysteine 35/cysteine 55, cysteine 42/cysteine 74, cysteine 67/cysteine 79, cysteine 101/cysteine 147, cysteine 114/cysteine 124, and cysteine 131/cysteine 171. The short motif at 41–43 (ECD) is the D/ECD-tripeptide element. Positions 43, 44, 46, 58, and 59 each coordinate Ca(2+).

The protein belongs to the venom metalloproteinase (M12B) family. P-III subfamily. P-IIIa sub-subfamily. In terms of assembly, monomer. The cofactor is Zn(2+). Glycosylated. In terms of tissue distribution, expressed by the venom gland.

Its subcellular location is the secreted. Snake venom metalloproteinase that impairs hemostasis in the envenomed animal. This chain is Zinc metalloproteinase-disintegrin-like catroriarin, found in Crotalus atrox (Western diamondback rattlesnake).